Consider the following 699-residue polypeptide: Chitin synthase 7 (699 aa).

The next 6 membrane-spanning stretches (helical) occupy residues 19–39, 58–80, 98–118, 445–465, 474–494, and 507–527; these read IVGV…AAFL, SVVV…VVTL, LQWF…LFCI, FMQN…LAII, LPVG…IYFG, and VMFV…IFTA. The tract at residues 628-648 is disordered; it reads AAGGSGEASEPGTRWAPDPRE.

It belongs to the chitin synthase family. Class VI subfamily.

Its subcellular location is the cell membrane. It carries out the reaction [(1-&gt;4)-N-acetyl-beta-D-glucosaminyl](n) + UDP-N-acetyl-alpha-D-glucosamine = [(1-&gt;4)-N-acetyl-beta-D-glucosaminyl](n+1) + UDP + H(+). Polymerizes chitin, a structural polymer of the cell wall and septum, by transferring the sugar moiety of UDP-GlcNAc to the non-reducing end of the growing chitin polymer. Plays a role in cell wall integrity. Required to successfully penetrate the host plants and thus plays a key role in pathogenicity. The chain is Chitin synthase 7 from Verticillium dahliae (strain VdLs.17 / ATCC MYA-4575 / FGSC 10137) (Verticillium wilt).